Reading from the N-terminus, the 333-residue chain is CMP-N-acetylneuraminate-beta-galactosamide-alpha-2,3-sialyltransferase 4 (333 aa).

Over 1–8 (MTSKSHWK) the chain is Cytoplasmic. Residues 9-26 (LLALALVLVVVMVWYSIS) form a helical; Signal-anchor for type II membrane protein membrane-spanning segment. Residues 27–333 (REDRYIEFFY…MGAVKNLTYF (307 aa)) are Lumenal-facing. Residues asparagine 61, asparagine 131, asparagine 310, and asparagine 329 are each glycosylated (N-linked (GlcNAc...) asparagine). A disulfide bridge connects residues cysteine 120 and cysteine 273.

This sequence belongs to the glycosyltransferase 29 family. Broadly expressed among tissues with highest levels in the small intestine and colon.

It localises to the golgi apparatus. The protein localises to the golgi stack membrane. The enzyme catalyses a beta-D-galactosyl-(1-&gt;3)-N-acetyl-beta-D-galactosaminyl derivative + CMP-N-acetyl-beta-neuraminate = an N-acetyl-alpha-neuraminyl-(2-&gt;3)-beta-D-galactosyl-(1-&gt;3)-N-acetyl-beta-D-galactosaminyl derivative + CMP + H(+). It catalyses the reaction a beta-D-galactosyl-(1-&gt;3)-N-acetyl-alpha-D-galactosaminyl derivative + CMP-N-acetyl-beta-neuraminate = an N-acetyl-alpha-neuraminyl-(2-&gt;3)-beta-D-galactosyl-(1-&gt;3)-N-acetyl-alpha-D-galactosaminyl derivative + CMP + H(+). It carries out the reaction a beta-D-galactosyl-(1-&gt;4)-N-acetyl-beta-D-glucosaminyl derivative + CMP-N-acetyl-beta-neuraminate = an N-acetyl-alpha-neuraminyl-(2-&gt;3)-beta-D-galactosyl-(1-&gt;4)-N-acetyl-beta-D-glucosaminyl derivative + CMP + H(+). The catalysed reaction is a ganglioside GM1 (d18:1(4E)) + CMP-N-acetyl-beta-neuraminate = a ganglioside GD1a (d18:1(4E)) + CMP + H(+). The enzyme catalyses a ganglioside GA1 (d18:1(4E)) + CMP-N-acetyl-beta-neuraminate = a ganglioside GM1b (d18:1(4E)) + CMP + H(+). It catalyses the reaction a ganglioside GT1c (d18:1(4E)) + CMP-N-acetyl-beta-neuraminate = a ganglioside GQ1c (d18:1(4E)) + CMP + H(+). It carries out the reaction a neolactoside nLc4Cer + CMP-N-acetyl-beta-neuraminate = a neolactoside IV(3)-alpha-NeuAc-nLc4Cer + CMP + H(+). The catalysed reaction is a neolactoside nLc4Cer(d18:1(4E)) + CMP-N-acetyl-beta-neuraminate = a neolactoside IV(3)-alpha-NeuAc-nLc4Cer(d18:1(4E)) + CMP + H(+). It participates in protein modification; protein glycosylation. A beta-galactoside alpha2-3 sialyltransferase involved in terminal sialylation of glycoproteins and glycolipids. Catalyzes the transfer of sialic acid (N-acetyl-neuraminic acid; Neu5Ac) from the nucleotide sugar donor CMP-Neu5Ac onto acceptor Galbeta-(1-&gt;3)-GalNAc- and Galbeta-(1-&gt;4)-GlcNAc-terminated glycoconjugates through an alpha2-3 linkage. Plays a major role in hemostasis. Responsible for sialylation of plasma VWF/von Willebrand factor, preventing its recognition by asialoglycoprotein receptors (ASGPR) and subsequent clearance. Regulates ASGPR-mediated clearance of platelets. Participates in the biosynthesis of the sialyl Lewis X epitopes, both on O- and N-glycans, which are recognized by SELE/E-selectin, SELP/P-selectin and SELL/L-selectin. Essential for selectin-mediated rolling and adhesion of leukocytes during extravasation. Contributes to adhesion and transendothelial migration of neutrophils likely through terminal sialylation of CXCR2. In glycosphingolipid biosynthesis, sialylates GM1 and GA1 gangliosides to form GD1a and GM1b, respectively. Metabolizes brain c-series ganglioside GT1c forming GQ1c. Synthesizes ganglioside LM1 (IV3Neu5Ac-nLc4Cer), a major structural component of peripheral nerve myelin. This Mus musculus (Mouse) protein is CMP-N-acetylneuraminate-beta-galactosamide-alpha-2,3-sialyltransferase 4 (St3gal4).